The chain runs to 286 residues: MTIFAKDKLIAYGQLMRLDKPIGTLLLLWPTLWALYLAEKAMPTLSVLAIFIFGVFLMRSAGCVINDYADRHIDGKVKRTSLRPLSTGRATPREAKWLFIVLVFCSFLLVLCLNLYTIGLSVIAVILAFIYPFMKRYTHLPQFFLGAAFGWSIPMAYGATIEALPLECWLLFIANLSWTVAYDTQYAMVDRDDDLRIGVKSTAILFAQYDNKIIALLQIITLIFLFSVGYLSQLNNRYFIVLAIAGLFFVYQCRLTKNRDRESCFNAFLNNNYFGLTVFIAVLFGI.

Helical transmembrane passes span 22-42, 45-65, 98-118, 143-163, 213-233, 238-255, and 266-286; these read IGTL…EKAM, LSVL…GCVI, LFIV…LYTI, FFLG…TIEA, IIAL…YLSQ, YFIV…QCRL, and NAFL…LFGI.

It belongs to the UbiA prenyltransferase family. It depends on Mg(2+) as a cofactor.

It localises to the cell inner membrane. The catalysed reaction is all-trans-octaprenyl diphosphate + 4-hydroxybenzoate = 4-hydroxy-3-(all-trans-octaprenyl)benzoate + diphosphate. Its pathway is cofactor biosynthesis; ubiquinone biosynthesis. Catalyzes the prenylation of para-hydroxybenzoate (PHB) with an all-trans polyprenyl group. Mediates the second step in the final reaction sequence of ubiquinone-8 (UQ-8) biosynthesis, which is the condensation of the polyisoprenoid side chain with PHB, generating the first membrane-bound Q intermediate 3-octaprenyl-4-hydroxybenzoate. The sequence is that of 4-hydroxybenzoate octaprenyltransferase from Histophilus somni (strain 2336) (Haemophilus somnus).